We begin with the raw amino-acid sequence, 511 residues long: Potassium voltage-gated channel subfamily A member 10 (511 aa).

The segment at 25-44 is disordered; the sequence is EPGYATDFDPTSSKGRPGSS. Residues 218–238 form a helical membrane-spanning segment; sequence VAVVSVLVVVISITIFCLETL. A helical transmembrane segment spans residues 271-292; sequence FFMVESTCIVWFTFELVLRFVV. Residue Cys-293 is the site of S-palmitoyl cysteine attachment. The helical transmembrane segment at 303-323 threads the bilayer; it reads IMNIIDIISIIPYFATLITEL. The helical; Voltage-sensor transmembrane segment at 339 to 358 threads the bilayer; sequence ILRIIRLVRVFRIFKLSRHS. The helical transmembrane segment at 375 to 395 threads the bilayer; that stretch reads LGLLIFFLFIGVILFSSAVYF. The Selectivity filter signature appears at 421–426; it reads TVGYGD. The helical transmembrane segment at 436–456 threads the bilayer; the sequence is IVGTLCAIAGVLTIALPVPVI. The segment at 489-511 is disordered; that stretch reads SRMGSTESLNKTNGSCSAEKSRK.

Belongs to the potassium channel family. A (Shaker) (TC 1.A.1.2) subfamily. Kv1.8/KCNA10 sub-subfamily. As to quaternary structure, homotetramer. Interacts with KCN4B/POMP. Interaction with KCN4B/POMP is necessary for the modulation of channel activity by cAMP. In terms of tissue distribution, expressed strongly in the inner ear and weakly in skeletal muscle. Not detected in other tissues.

It localises to the membrane. The catalysed reaction is K(+)(in) = K(+)(out). Its activity is regulated as follows. The channel activity is up-regulated by cAMP. Its function is as follows. Voltage-gated potassium ion channel that mediates K(+) permeability of excitable membranes. When opened in response to the voltage difference across the membrane, KCNA10 channel selectively allows the flow of potassium ions across the membrane down their electrochemical gradient. The protein is Potassium voltage-gated channel subfamily A member 10 of Mus musculus (Mouse).